The sequence spans 1026 residues: Multidrug resistance protein MdtC (1026 aa).

11 helical membrane-spanning segments follow: residues 15–35 (ILIA…LPVA), 333–353 (EVEE…FLFL), 360–380 (LIPA…MYLC), 387–407 (LSLM…IVVL), 431–451 (VGFT…PLLL), 463–483 (FAVT…TLTP), 528–548 (LVGV…IAIP), 853–873 (LILI…LYES), 897–917 (LFNA…IGIV), 953–973 (PIMM…LSGG), and 984–1004 (ITIV…TPVV).

This sequence belongs to the resistance-nodulation-cell division (RND) (TC 2.A.6) family. MdtC subfamily. As to quaternary structure, part of a tripartite efflux system composed of MdtA, MdtB and MdtC. MdtC forms a heteromultimer with MdtB.

It is found in the cell inner membrane. In Salmonella enteritidis PT4 (strain P125109), this protein is Multidrug resistance protein MdtC.